The sequence spans 1409 residues: DNA-directed RNA polymerase subunit beta' (1409 aa).

Residues cysteine 70, cysteine 72, cysteine 85, and cysteine 88 each coordinate Zn(2+). Residues aspartate 461, aspartate 463, and aspartate 465 each coordinate Mg(2+). Cysteine 833, cysteine 907, cysteine 914, and cysteine 917 together coordinate Zn(2+). The interval 1389–1409 (EPVAQAAESEDVPDVSQQEAA) is disordered.

The protein belongs to the RNA polymerase beta' chain family. In terms of assembly, the RNAP catalytic core consists of 2 alpha, 1 beta, 1 beta' and 1 omega subunit. When a sigma factor is associated with the core the holoenzyme is formed, which can initiate transcription. It depends on Mg(2+) as a cofactor. Requires Zn(2+) as cofactor.

The catalysed reaction is RNA(n) + a ribonucleoside 5'-triphosphate = RNA(n+1) + diphosphate. DNA-dependent RNA polymerase catalyzes the transcription of DNA into RNA using the four ribonucleoside triphosphates as substrates. The polypeptide is DNA-directed RNA polymerase subunit beta' (Pelobacter propionicus (strain DSM 2379 / NBRC 103807 / OttBd1)).